Here is a 332-residue protein sequence, read N- to C-terminus: MSLCNLAKIRSVAIKAVEKACIACLDIQKQLISEDTINKKDQSPVTVGDYTVQALVINELLKGLDEEYPIIAEEDSKTLSSQKDVESKVLSFFNRYSNESFVESQLSSLLDKGNKKKDLNSSNRWWTLDPIDGTLGFLRKDQYAVALALMEDNKPILGILGCPNLPVSKGSTEKGCIFVGLKNKGSFMIKLSNLDQEEPIKVSNQSDPTKAIFTESFVSRGFGHELNQKISNSMGVTAEPLKIDSQCKYAMVARGDSDCYLRLTQLDYKECIWDHAAGHIIVEEAGGIVTDFKKQQLDYSKGFKLENNVGIVCSNKLLNDSLFDSIKKSIQF.

The active-site Proton acceptor is aspartate 49. Positions 73, 129, 131, and 132 each coordinate Mg(2+). Threonine 134 (proton acceptor) is an active-site residue. Adenosine 3',5'-bisphosphate-binding residues include threonine 134, serine 245, lysine 248, arginine 262, and aspartate 274. AMP is bound by residues serine 245, lysine 248, arginine 262, and aspartate 274. Aspartate 274 lines the Mg(2+) pocket.

It belongs to the inositol monophosphatase superfamily. The cofactor is Mg(2+).

It catalyses the reaction 3'-phosphoadenylyl sulfate + H2O = adenosine 5'-phosphosulfate + phosphate. The catalysed reaction is adenosine 3',5'-bisphosphate + H2O = AMP + phosphate. The enzyme catalyses adenosine 2',5'-bisphosphate + H2O = AMP + phosphate. It carries out the reaction 1D-myo-inositol 1,4-bisphosphate + H2O = 1D-myo-inositol 4-phosphate + phosphate. It catalyses the reaction 1D-myo-inositol 1,3,4-trisphosphate + H2O = 1D-myo-inositol 3,4-bisphosphate + phosphate. Functionally, phosphatase that converts adenosine 3'-phosphate 5'-phosphosulfate (PAPS) to adenosine 5'-phosphosulfate (APS) and 3'(2')-phosphoadenosine 5'-phosphate (PAP) to AMP. Is also able to hydrolyze inositol 1,4-bisphosphate and inositol 1,3,4-trisphosphate. The protein is 3'(2'),5'-bisphosphate nucleotidase of Dictyostelium discoideum (Social amoeba).